The primary structure comprises 511 residues: Caspase-8 (511 aa).

Residues 1 to 242 constitute a propeptide that is removed on maturation; it reads MSGHNILTQL…MDGNGIANES (242 aa). Residues H352 and C393 contribute to the active site. Residues 406–415 constitute a propeptide that is removed on maturation; that stretch reads KINASTKSPC.

This sequence belongs to the peptidase C14A family. In terms of assembly, heterotetramer that consists of two anti-parallel arranged heterodimers, each one formed by a 15 kDa (caspase-8 subunit p15) and a 10 kDa (caspase-8 subunit p10) subunit. Interacts with the N-terminus of Fadd.

Its subcellular location is the cytoplasm. It carries out the reaction Strict requirement for Asp at position P1 and has a preferred cleavage sequence of (Leu/Asp/Val)-Glu-Thr-Asp-|-(Gly/Ser/Ala).. Effector of the programmed cell death (PCD) activators rpr, grim and W. May play an apoptotic role in the germline as well as soma. Role in immune response, required to resist Gram-negative bacterial infections by regulating DptA. Fadd interacts with Dredd, Fadd promotes cleavage of Dredd and is necessary and sufficient for enhancing Dredd-induced apoptosis. This chain is Caspase-8, found in Drosophila pseudoobscura pseudoobscura (Fruit fly).